A 1279-amino-acid polypeptide reads, in one-letter code: Talin-A (1279 aa).

Residues 84 to 365 form the FERM domain; it reads RPQKFKLLDG…GYIEIIMKAR (282 aa).

Its subcellular location is the cytoplasm. It localises to the cytoskeleton. It is found in the cell cortex. Actin-binding protein that may be involved in the control of cell motility and chemotaxis. The polypeptide is Talin-A (talA) (Dictyostelium discoideum (Social amoeba)).